A 557-amino-acid chain; its full sequence is Formate--tetrahydrofolate ligase (557 aa).

65-72 (TPAGEGKT) contacts ATP.

This sequence belongs to the formate--tetrahydrofolate ligase family.

It catalyses the reaction (6S)-5,6,7,8-tetrahydrofolate + formate + ATP = (6R)-10-formyltetrahydrofolate + ADP + phosphate. The protein operates within one-carbon metabolism; tetrahydrofolate interconversion. This Methylorubrum populi (strain ATCC BAA-705 / NCIMB 13946 / BJ001) (Methylobacterium populi) protein is Formate--tetrahydrofolate ligase.